Consider the following 426-residue polypeptide: Cephalotocin receptor 2 (426 aa).

At 1–51 the chain is on the extracellular side; the sequence is MYQAMEVESTSPSGFFLDFYTQSTIPTTDFLNNTNSSHPIRDEKLVKIEIA. N-linked (GlcNAc...) asparagine glycosylation is found at N32 and N35. A helical transmembrane segment spans residues 52-72; sequence VLGTCFTLAIINNLCVLLVLL. Over 73-84 the chain is Cytoplasmic; the sequence is WRRKKVRRMQMF. Residues 85-105 form a helical membrane-spanning segment; the sequence is ILHLSIADLIVAFFNILPQLI. The Extracellular segment spans residues 106-120; that stretch reads WDITFRFMAGDAMCR. C119 and C198 are disulfide-bonded. Residues 121-141 traverse the membrane as a helical segment; it reads FIKYAQMFSLYLSTYILIMTA. Topologically, residues 142 to 165 are cytoplasmic; it reads VDRYRAICHPLSNQTWTPCMVYCK. A helical transmembrane segment spans residues 166–186; it reads IFIAYAIATIFSIPQAILFQM. Topologically, residues 187–208 are extracellular; sequence QEVNEGSGIYDCWVHFEPAWVL. The chain crosses the membrane as a helical span at residues 209-229; sequence TAYALYIFFALYLIPILILFF. At 230–288 the chain is on the cytoplasmic side; it reads TYGSICYTIWAKYRHAIKTKKDANTRYPQRRKKKGVILRTHSVHGFSKAKLNSVKLTFA. The chain crosses the membrane as a helical span at residues 289–309; that stretch reads VIVTYIICWSPFFVSQIWWLF. Residues 310 to 319 lie on the Extracellular side of the membrane; that stretch reads DETVVGNAGV. A helical transmembrane segment spans residues 320-340; sequence VVILLMACLNSCTNPWIYLIF. Residues 341 to 426 are Cytoplasmic-facing; it reads NRNYISNVLP…DQFIYSDKTT (86 aa). The tract at residues 373-426 is disordered; sequence GSVRRDSRKTSDPKRISESRRISDARRISGKTQKNNSSSPRKTSDQFIYSDKTT. The span at 375–399 shows a compositional bias: basic and acidic residues; sequence VRRDSRKTSDPKRISESRRISDARR. Polar residues predominate over residues 402–426; sequence GKTQKNNSSSPRKTSDQFIYSDKTT.

It belongs to the G-protein coupled receptor 1 family. Vasopressin/oxytocin receptor subfamily. As to expression, present in various peripheral tissues with highest expression in branchia and vas deferens. Very low expression detected in nervous system.

It is found in the cell membrane. In terms of biological role, acts as a receptor for cephalotocin. The protein is Cephalotocin receptor 2 of Octopus vulgaris (Common octopus).